Reading from the N-terminus, the 477-residue chain is Cysteine--tRNA ligase (477 aa).

Residue cysteine 28 coordinates Zn(2+). The short motif at proline 30–asparagine 40 is the 'HIGH' region element. Residues cysteine 213, histidine 238, and glutamate 242 each coordinate Zn(2+). A 'KMSKS' region motif is present at residues lysine 270–serine 274. Lysine 273 contributes to the ATP binding site.

The protein belongs to the class-I aminoacyl-tRNA synthetase family. In terms of assembly, monomer. Zn(2+) serves as cofactor.

The protein localises to the cytoplasm. It carries out the reaction tRNA(Cys) + L-cysteine + ATP = L-cysteinyl-tRNA(Cys) + AMP + diphosphate. In Chlamydia trachomatis serovar D (strain ATCC VR-885 / DSM 19411 / UW-3/Cx), this protein is Cysteine--tRNA ligase (cysS).